The chain runs to 890 residues: DNA mismatch repair protein MutS (890 aa).

The span at 1 to 13 shows a compositional bias: basic and acidic residues; sequence MDKGINLQNDKEP. A disordered region spans residues 1–23; it reads MDKGINLQNDKEPSPMAEGNPAD. 649–656 is an ATP binding site; the sequence is GPNMGGKS.

This sequence belongs to the DNA mismatch repair MutS family.

Its function is as follows. This protein is involved in the repair of mismatches in DNA. It is possible that it carries out the mismatch recognition step. This protein has a weak ATPase activity. The chain is DNA mismatch repair protein MutS from Paracidovorax citrulli (strain AAC00-1) (Acidovorax citrulli).